A 176-amino-acid chain; its full sequence is Peptide deformylase (176 aa).

Positions 100 and 142 each coordinate Fe cation. The active site involves E143. Position 146 (H146) interacts with Fe cation.

Belongs to the polypeptide deformylase family. Fe(2+) is required as a cofactor.

It carries out the reaction N-terminal N-formyl-L-methionyl-[peptide] + H2O = N-terminal L-methionyl-[peptide] + formate. Its function is as follows. Removes the formyl group from the N-terminal Met of newly synthesized proteins. Requires at least a dipeptide for an efficient rate of reaction. N-terminal L-methionine is a prerequisite for activity but the enzyme has broad specificity at other positions. This Elusimicrobium minutum (strain Pei191) protein is Peptide deformylase.